The following is an 868-amino-acid chain: Protein NIP100 (868 aa).

In terms of domain architecture, CAP-Gly spans 34–84 (GETQFAKGIWYGIELDKPLGKNDGSANGIRYFDIDLKKANSNGGYYGLFCK). 3 coiled-coil regions span residues 101–175 (LNGN…HLDN), 207–375 (LDQT…QEEL), and 645–776 (SLLS…QIKE).

In terms of assembly, component of the dynactin complex composed of at least ARP1, JNM1, NIP100 and ARP10. Dynactin comprises a short rod of the ARP1 filament attached to ARP10 at its pointed-end and probably associated with the capping protein at its barbed-end. The rod is implicated in dynein cargo binding. A sidearm formed by NIP100 projects from the ARP1 filament and is implicated in motor binding.

Its subcellular location is the cytoplasm. It is found in the cytoskeleton. The protein localises to the spindle pole. Its function is as follows. Motor-binding component of the dynactin complex which assists cytoplasmic dynein by increasing its processivity and by regulation of its cargo binding. The dynactin complex is required for the spindle translocation late in anaphase and is involved in a cell wall synthesis checkpoint. The chain is Protein NIP100 (NIP100) from Saccharomyces cerevisiae (strain ATCC 204508 / S288c) (Baker's yeast).